The primary structure comprises 304 residues: Ornithine carbamoyltransferase (304 aa).

Carbamoyl phosphate is bound by residues 53–56 (STRT), Gln80, Arg104, and 131–134 (HPCQ). Residues Asn162, Asp219, and 223-224 (SM) contribute to the L-ornithine site. Residues 259-260 (CL) and Arg287 contribute to the carbamoyl phosphate site.

The protein belongs to the aspartate/ornithine carbamoyltransferase superfamily. OTCase family.

Its subcellular location is the cytoplasm. The catalysed reaction is carbamoyl phosphate + L-ornithine = L-citrulline + phosphate + H(+). Its pathway is amino-acid biosynthesis; L-arginine biosynthesis; L-arginine from L-ornithine and carbamoyl phosphate: step 1/3. Functionally, reversibly catalyzes the transfer of the carbamoyl group from carbamoyl phosphate (CP) to the N(epsilon) atom of ornithine (ORN) to produce L-citrulline. The chain is Ornithine carbamoyltransferase from Nitrosococcus oceani (strain ATCC 19707 / BCRC 17464 / JCM 30415 / NCIMB 11848 / C-107).